The sequence spans 1239 residues: Inner tegument protein (1239 aa).

Disordered stretches follow at residues 1-20, 669-704, 959-980, and 1087-1239; these read MASA…DAQP, GESP…GGGP, RPPP…DTPP, and GRNA…AEDE. The interaction with large tegument protein stretch occupies residues 615 to 1239; the sequence is NELPKTRSLA…RPPRPTAEDE (625 aa). Low complexity predominate over residues 1112–1123; the sequence is DSSPFSFSSSDF. A compositionally biased stretch (gly residues) spans 1139-1148; that stretch reads VPGGGGGGEG. The segment covering 1151–1170 has biased composition (basic and acidic residues); the sequence is EEERERPSDIDTAARARKVE. The span at 1180-1189 shows a compositional bias: low complexity; that stretch reads RTTPSPSRRA. Residues 1219–1232 show a composition bias toward basic residues; that stretch reads VRPRTRRGATRRPP.

The protein belongs to the herpesviridae inner tegument protein family. In terms of assembly, interacts (via C-terminus) with the large tegument protein/LTP (via N-terminus).

The protein localises to the virion tegument. Its subcellular location is the host cytoplasm. The protein resides in the host nucleus. It localises to the host Golgi apparatus. It is found in the host trans-Golgi network. In terms of biological role, plays an essential role in cytoplasmic secondary envelopment during viral egress. Interacts with the capsid via the large tegument protein/LTP and participates in its transport to the host trans-Golgi network (TGN) where secondary envelopment occurs. Modulates tegumentation and capsid accumulation at the viral assembly complex. The chain is Inner tegument protein from Homo sapiens (Human).